The following is an 86-amino-acid chain: Large ribosomal subunit protein eL43 (86 aa).

Residues 38-59 (CPVCGRKAVRRISTGIWQCQKC) form a C4-type zinc finger.

The protein belongs to the eukaryotic ribosomal protein eL43 family. Zn(2+) is required as a cofactor.

The chain is Large ribosomal subunit protein eL43 from Thermococcus gammatolerans (strain DSM 15229 / JCM 11827 / EJ3).